Reading from the N-terminus, the 499-residue chain is Probable UTP--glucose-1-phosphate uridylyltransferase (499 aa).

UTP contacts are provided by residues 108–111 (LNGG), Lys-122, Gln-185, and Gly-214. Position 110–111 (110–111 (GG)) interacts with substrate. Substrate-binding positions include His-215 and 243-245 (NID). UTP contacts are provided by Asp-245 and Lys-387.

It belongs to the UDPGP type 1 family.

It is found in the cytoplasm. It localises to the nucleus. It catalyses the reaction alpha-D-glucose 1-phosphate + UTP + H(+) = UDP-alpha-D-glucose + diphosphate. Plays a central role as a glucosyl donor in cellular metabolic pathways. This chain is Probable UTP--glucose-1-phosphate uridylyltransferase, found in Schizosaccharomyces pombe (strain 972 / ATCC 24843) (Fission yeast).